The following is a 662-amino-acid chain: LIM domain kinase 1 (662 aa).

2 LIM zinc-binding domains span residues 24 to 83 (PVCA…RFGE) and 84 to 145 (LCHG…MVVT). The region spanning 166-259 (LVSIPACSDG…LLQLTIEHDP (94 aa)) is the PDZ domain. Residues 262–328 (PLPRDLALPC…ASQRKDIGRS (67 aa)) form a disordered region. The span at 272 to 287 (SPLPDPHSPLRSPVPA) shows a compositional bias: pro residues. The segment covering 309 to 320 (SPGSSSVGSPAS) has biased composition (low complexity). The region spanning 346–611 (LIHGEVLGKG…PSFSKLEQWL (266 aa)) is the Protein kinase domain. ATP-binding positions include 352-360 (LGKGCFGQA) and lysine 375. The active site involves aspartate 467.

This sequence belongs to the protein kinase superfamily. TKL Ser/Thr protein kinase family. As to expression, expressed predominantly in the brain.

The protein localises to the cytoplasm. It is found in the nucleus. It localises to the cytoskeleton. Its subcellular location is the cell projection. The protein resides in the growth cone. The enzyme catalyses L-seryl-[protein] + ATP = O-phospho-L-seryl-[protein] + ADP + H(+). It carries out the reaction L-threonyl-[protein] + ATP = O-phospho-L-threonyl-[protein] + ADP + H(+). In terms of biological role, protein kinase which regulates actin filament dynamics. Phosphorylates and inactivates the actin binding/depolymerizing factor cofilin, thereby stabilizing the actin cytoskeleton. Required for motility of the axon growth cone. This is LIM domain kinase 1 (LIMK1) from Gallus gallus (Chicken).